A 1738-amino-acid chain; its full sequence is Sodium leak channel NALCN (1738 aa).

The Cytoplasmic segment spans residues 1-36 (MLKRKQSSRVEAQPVTDFGPDESLSDNADILWINKP). A helical transmembrane segment spans residues 37-57 (WVHSLLRICAIISVISVCMNT). The Extracellular portion of the chain corresponds to 58–65 (PMTFEHYP). The chain crosses the membrane as a helical span at residues 66 to 90 (PLQYVTFTLDTLLMFLYTAEMIAKM). The Cytoplasmic segment spans residues 91–106 (HIRGIVKGDSSYVKDR). The helical transmembrane segment at 107 to 129 (WCVFDGFMVFCLWVSLVLQVFEI) threads the bilayer. Residues 130–137 (ADIVDQMS) are Extracellular-facing. Residues 138 to 158 (PWGMLRIPRPLIMIRAFRIYF) traverse the membrane as a helical; Voltage-sensor segment. The Cytoplasmic segment spans residues 159–173 (RFELPRTRITNILKR). The helical transmembrane segment at 174–199 (SGEQIWSVSIFLLFFLLLYGILGVQM) threads the bilayer. Topologically, residues 200–269 (FGTFTYHCVV…YSGFNEIGTS (70 aa)) are extracellular. 2 disulfide bridges follow: Cys-207–Cys-239 and Cys-229–Cys-245. 2 N-linked (GlcNAc...) asparagine glycosylation sites follow: Asn-210 and Asn-216. An intramembrane region (pore-forming) is located at residues 270–289 (IFTVYEASSQEGWVFLMYRA). At 290 to 294 (IDSFP) the chain is on the extracellular side. A helical transmembrane segment spans residues 295-322 (RWRSYFYFITLIFFLAWLVKNVFIAVII). The Cytoplasmic portion of the chain corresponds to 323-382 (ETFAEIRVQFQQMWGTRSSTTSTATTQMFHEDAAGGWQLVAVDVNKPQGRAPACLQKMMR). Residues 383–403 (SSVFHMFILSMVTVDVIVAAS) traverse the membrane as a helical segment. The Extracellular portion of the chain corresponds to 404 to 416 (NYYKGENFRRQYD). The helical transmembrane segment at 417 to 439 (EFYLAEVAFTVLFDLEALLKIWC) threads the bilayer. At 440–447 (LGFTGYIS) the chain is on the cytoplasmic side. The chain crosses the membrane as a helical span at residues 448–468 (SSLHKFELLLVIGTTLHVYPD). The Extracellular portion of the chain corresponds to 469–472 (LYHS). Residues 473–492 (QFTYFQVLRVVRLIKISPAL) form a helical; Voltage-sensor membrane-spanning segment. Over 493-502 (EDFVYKIFGP) the chain is Cytoplasmic. A helical transmembrane segment spans residues 503 to 530 (GKKLGSLVVFTASLLIVMSAISLQMFCF). Residues 531-543 (VEELDRFTTFPRA) lie on the Extracellular side of the membrane. Residues 544–563 (FMSMFQILTQEGWVDVMDQT) constitute an intramembrane region (pore-forming). The Extracellular portion of the chain corresponds to 564 to 578 (LNAVGHMWAPLVAIY). A helical transmembrane segment spans residues 579-599 (FILYHLFATLILLSLFVAVIL). At 600–886 (DNLELDEDLK…QLYDLLGLVT (287 aa)) the chain is on the cytoplasmic side. The tract at residues 762 to 785 (QERRSLRHGSNSQRISRGKSLETL) is disordered. Residues 795 to 830 (YRNAQREDSEIKMIQEKKEQAEMKRKVQEEELRENH) are a coiled coil. A helical membrane pass occupies residues 887–906 (YLDWVMITVTICSCISMMFE). At 907 to 915 (SPFRRVMHA) the chain is on the extracellular side. The chain crosses the membrane as a helical span at residues 916-939 (PTLQIAEYVFVIFMSIELNLKIMA). The Cytoplasmic portion of the chain corresponds to 940-947 (DGLFFTPT). The chain crosses the membrane as a helical span at residues 948–972 (AVIRDFGGVMDIFIYLVSLIFLCWM). Topologically, residues 973 to 980 (PQNVPAES) are extracellular. A helical; Voltage-sensor membrane pass occupies residues 981–1003 (GAQLLMVLRCLRPLRIFKLVPQM). The Cytoplasmic portion of the chain corresponds to 1004 to 1015 (RKVVRELFSGFK). Residues 1016 to 1039 (EIFLVSILLLTLMLVFASFGVQLF) traverse the membrane as a helical segment. The Extracellular portion of the chain corresponds to 1040–1104 (AGKLAKCNDP…NFNFDNVGNA (65 aa)). Cys-1046 and Cys-1057 are disulfide-bonded. Asn-1064 is a glycosylation site (N-linked (GlcNAc...) asparagine). An intramembrane region (pore-forming) is located at residues 1105-1124 (MLALFEVLSLKGWVEVRDVI). The Extracellular segment spans residues 1125-1129 (IHRVG). A helical membrane pass occupies residues 1130 to 1159 (PIHGIYIHVFVFLGCMIGLTLFVGVVIANF). Residues 1160 to 1210 (NENKGTALLTVDQRRWEDLKSRLKIAQPLHLPPRPDNDGFRAKMYDITQHP) lie on the Cytoplasmic side of the membrane. A helical transmembrane segment spans residues 1211 to 1227 (FFKRTIALLVLAQSVLL). At 1228–1236 (SVKWDVDDP) the chain is on the extracellular side. Residues 1237–1260 (VTVPLATMSVVFTFIFVLEVTMKI) form a helical membrane-spanning segment. Topologically, residues 1261 to 1271 (IAMSPAGFWQS) are cytoplasmic. Residues 1272–1293 (RRNRYDLLVTSLGVVWVVLHFA) form a helical membrane-spanning segment. Residues 1294–1296 (LLN) lie on the Extracellular side of the membrane. The helical; Voltage-sensor transmembrane segment at 1297–1318 (AYTYMMGACVIVFRFFSICGKH) threads the bilayer. The Cytoplasmic portion of the chain corresponds to 1319–1331 (VTLKMLLLTVVVS). A helical membrane pass occupies residues 1332-1357 (MYKSFFIIVGMFLLLLCYAFAGVVLF). At 1358-1378 (GTVKYGENINRHANFSSAGKA) the chain is on the extracellular side. Residues 1379-1398 (ITVLFRIVTGEDWNKIMHDC) constitute an intramembrane region (pore-forming). Residues 1399-1420 (MVQPPFCTPDEFTYWATDCGNY) lie on the Extracellular side of the membrane. Residues Cys-1405 and Cys-1417 are joined by a disulfide bond. The helical transmembrane segment at 1421 to 1447 (AGALMYFCSFYVIIAYIMLNLLVAIIV) threads the bilayer. Over 1448 to 1738 (ENFSLFYSTE…DESGDDLLDI (291 aa)) the chain is Cytoplasmic. The interval 1602 to 1679 (EQERSRFLNP…WRLPSAPKPI (78 aa)) is disordered. Residues 1613–1631 (SIETTQPSEDSNANSQDHS) show a composition bias toward polar residues. The segment covering 1633 to 1648 (QPETSSQQQLLSPTLS) has biased composition (low complexity).

This sequence belongs to the NALCN family. As to quaternary structure, found in a complex with NALCN, UNC79, UNC80 and NACL1; these auxiliary subunits are indispensable for the function of the NALCN channel. Interacts with UNC80; required for the NALCN activation/inhibition by GPCRs in neurons. Found in a complex with NALCN, UNC79 and UNC80; UNC80 bridges NALCN to UNC79. Interacts with CHRM3. Post-translationally, phosphorylated on tyrosine residues. Widely expressed in the brain and spinal cord neurons. Expressed also in pancreatic islet cells.

It is found in the cell membrane. It catalyses the reaction Na(+)(in) = Na(+)(out). With respect to regulation, inhibited by low micromolar concentrations of Gd(3+) and high micromolar concentrations of verapamil. Insensitive to tetrodotoxin (TTX) and potentiated by low external Ca(2+) concentration. Voltage-gated ion channel responsible for the resting Na(+) permeability that controls neuronal excitability. NALCN channel functions as a multi-protein complex, which consists at least of NALCN, NALF1, UNC79 and UNC80. NALCN is the voltage-sensing, pore-forming subunit of the NALCN channel complex. NALCN channel complex is constitutively active and conducts monovalent cations but is blocked by physiological concentrations of extracellular divalent cations. In addition to its role in regulating neuronal excitability, is required for normal respiratory rhythm, systemic osmoregulation by controlling the serum sodium concentration and in the regulation of the intestinal pace-making activity in the interstitial cells of Cajal. Plays a critical role in both maintenance of spontaneous firing of substantia nigra pars reticulata (SNr) neurons and physiological modulation of SNr neuron excitability. NALCN channel is also activated by neuropeptides such as neurotensin and substance P (SP) through a SRC family kinases-dependent pathway. In addition, NALCN activity is enhanced/modulated by several GPCRs, such as CHRM3. The sequence is that of Sodium leak channel NALCN (Nalcn) from Mus musculus (Mouse).